The primary structure comprises 366 residues: Anhydro-N-acetylmuramic acid kinase (366 aa).

10–17 (GTSMDGID) contacts ATP.

The protein belongs to the anhydro-N-acetylmuramic acid kinase family.

It carries out the reaction 1,6-anhydro-N-acetyl-beta-muramate + ATP + H2O = N-acetyl-D-muramate 6-phosphate + ADP + H(+). The protein operates within amino-sugar metabolism; 1,6-anhydro-N-acetylmuramate degradation. It participates in cell wall biogenesis; peptidoglycan recycling. In terms of biological role, catalyzes the specific phosphorylation of 1,6-anhydro-N-acetylmuramic acid (anhMurNAc) with the simultaneous cleavage of the 1,6-anhydro ring, generating MurNAc-6-P. Is required for the utilization of anhMurNAc either imported from the medium or derived from its own cell wall murein, and thus plays a role in cell wall recycling. The polypeptide is Anhydro-N-acetylmuramic acid kinase (Legionella pneumophila subsp. pneumophila (strain Philadelphia 1 / ATCC 33152 / DSM 7513)).